The sequence spans 170 residues: uncharacterized protein (170 aa).

The Cytoplasmic portion of the chain corresponds to Met1 to Ser15. A helical membrane pass occupies residues Leu16–Ala36. The Extracellular segment spans residues Ser37–Ser76. A helical transmembrane segment spans residues Leu77–Ser97. Residues Arg98–Ala119 are Cytoplasmic-facing. The chain crosses the membrane as a helical span at residues Val120–Leu140. Over Pro141–Leu170 the chain is Extracellular.

It is found in the membrane. This is an uncharacterized protein from Saccharomyces cerevisiae (strain ATCC 204508 / S288c) (Baker's yeast).